We begin with the raw amino-acid sequence, 434 residues long: N-lysine methyltransferase SMYD2-B (434 aa).

Residues 8–242 (PGIEQFASPG…PGQEIYTSYI (235 aa)) form the SET domain. Residue 18 to 20 (KGR) coordinates S-adenosyl-L-methionine. Zn(2+)-binding residues include cysteine 53, cysteine 56, cysteine 66, cysteine 69, cysteine 75, cysteine 79, histidine 87, and cysteine 91. The MYND-type zinc-finger motif lies at 53–91 (CEQCFTRKKGLAKCGKCKKAFYCNANCQKKNWPMHKLEC). Residues histidine 138, 207 to 208 (NH), and 259 to 261 (YYF) each bind S-adenosyl-L-methionine.

It belongs to the class V-like SAM-binding methyltransferase superfamily.

The protein resides in the cytoplasm. Its subcellular location is the cytosol. The protein localises to the nucleus. The enzyme catalyses L-lysyl(4)-[histone H3] + 3 S-adenosyl-L-methionine = N(6),N(6),N(6)-trimethyl-L-lysyl(4)-[histone H3] + 3 S-adenosyl-L-homocysteine + 3 H(+). It catalyses the reaction L-lysyl-[protein] + S-adenosyl-L-methionine = N(6)-methyl-L-lysyl-[protein] + S-adenosyl-L-homocysteine + H(+). Protein-lysine N-methyltransferase that methylates both histones and non-histone proteins, including p53/TP53 and RB1. Specifically trimethylates histone H3 'Lys-4' (H3K4me3) in vivo. The activity requires interaction with HSP90alpha. Shows even higher methyltransferase activity on p53/TP53. Monomethylates 'Lys-370' of p53/TP53, leading to decreased DNA-binding activity and subsequent transcriptional regulation activity of p53/TP53. Monomethylates RB1 at 'Lys-860'. The protein is N-lysine methyltransferase SMYD2-B (smyd2b) of Danio rerio (Zebrafish).